The sequence spans 283 residues: Protein ATAF2 (283 aa).

The NAC domain maps to 7 to 159; it reads LPAGFRFHPT…DWVLCRIYNK (153 aa). Residues 103–165 mediate DNA binding; the sequence is LGIKKALVFY…IYNKKGTMEK (63 aa). Positions 171 to 211 are disordered; that stretch reads EKPRTTTMAEQSSSPFDTSDSTYPTLQEDDSSSSGGHGHVV. Over residues 175-195 the composition is skewed to polar residues; it reads TTTMAEQSSSPFDTSDSTYPT.

Homodimer. Interacts with AHK2. Interacts with AHL12 and AHL27. Interacts with the helicase domain of the tobamovirus (TMV) replicase. Expressed in roots, cotyledons, rosette leaves, cauline leaves and mature flowers. Expressed at low levels in stems and flower buds.

The protein resides in the nucleus. In terms of biological role, involved in disease resistance response. May function as repressor of pathogenesis-related proteins. May function in the regulation of host basal defense responses against viral infection. Transcriptional activator involved in responses to wounding and infection with tobamovirus (TMV). Binds to the DNA sequences 5'-AAAATATCT-3' and 5'AGATTTTT-3' of CYP734A1/BAS1 and CYP72C1/SOB7 promoters, respectively. Acts as a suppressor of the brassinosteroid (BR)-inactivating enzymes CYP734A1/BAS1 and CYP72C1/SOB7, and prevents their expression in almost all tissues. Plays a central role in integrating BR homeostasis and seedling development. Regulates the spatial regulation of BR homeostasis and participates in the regulation of hypocotyl elongation and root growth by suppressing BR catabolism. Mediates connection between BR catabolism and photomorphogenesis. Binds to, and transactivates the promoter of the auxin biosynthetic gene NIT2. Stress-responsive NAC transcription factor involved in ABA-inducible leaf senescence signaling. Required for normal seed development and morphology. The polypeptide is Protein ATAF2 (NAC081) (Arabidopsis thaliana (Mouse-ear cress)).